The following is a 295-amino-acid chain: Dual specificity protein phosphatase 15 (295 aa).

Positions 1–141 (MTEGVLPGLY…LEEFGWASSQ (141 aa)) constitute a Tyrosine-protein phosphatase domain. Residue Thr2 is the site of N-myristoyl glycine attachment. Cys85 serves as the catalytic Phosphocysteine intermediate. The segment covering 251–270 (SSSCTLSASTERPDGSSTPG) has biased composition (polar residues). A disordered region spans residues 251–272 (SSSCTLSASTERPDGSSTPGNP).

Belongs to the protein-tyrosine phosphatase family. Non-receptor class dual specificity subfamily. In terms of tissue distribution, highly expressed in testis. Expressed in brain; up-regulated in patients with multiple sclerosis gray matter lesions.

It is found in the cytoplasm. The protein resides in the cell membrane. It catalyses the reaction O-phospho-L-tyrosyl-[protein] + H2O = L-tyrosyl-[protein] + phosphate. The catalysed reaction is O-phospho-L-seryl-[protein] + H2O = L-seryl-[protein] + phosphate. The enzyme catalyses O-phospho-L-threonyl-[protein] + H2O = L-threonyl-[protein] + phosphate. May dephosphorylate MAPK13, ATF2, ERBB3, PDGFRB and SNX6. Its function is as follows. May play a role in the regulation of oligodendrocyte differentiation. May play a role in the regulation of myelin formation. Involved in the regulation of Erk1/2 phosphorylation in Schwann cells; the signaling may be linked to the regulation of myelination. The sequence is that of Dual specificity protein phosphatase 15 from Homo sapiens (Human).